Consider the following 254-residue polypeptide: Cdc42 effector protein 3 (254 aa).

Residues 31–45 (ISPPLGDFRHTIHIG) enclose the CRIB domain. A Phosphotyrosine modification is found at tyrosine 63. Serine 89, serine 108, and serine 144 each carry phosphoserine. Residues 165–205 (VHQGDTSWGSSGSGSQSSQGRDSHSSSLSEQSSDWPADDMF) are disordered. Positions 171–197 (SWGSSGSGSQSSQGRDSHSSSLSEQSS) are enriched in low complexity.

This sequence belongs to the BORG/CEP family. As to quaternary structure, interacts with RHOQ and CDC42, in a GTP-dependent manner, and with SEPT7.

Its subcellular location is the endomembrane system. The protein localises to the cytoplasm. It localises to the cytoskeleton. Functionally, probably involved in the organization of the actin cytoskeleton. May act downstream of CDC42 to induce actin filament assembly leading to cell shape changes. Induces pseudopodia formation in fibroblasts. The polypeptide is Cdc42 effector protein 3 (Cdc42ep3) (Mus musculus (Mouse)).